Consider the following 148-residue polypeptide: Low molecular weight protein-tyrosine-phosphatase Etp (148 aa).

Residue C13 is the Nucleophile of the active site. R19 is a catalytic residue. Catalysis depends on D119, which acts as the Proton donor.

It belongs to the low molecular weight phosphotyrosine protein phosphatase family.

It catalyses the reaction O-phospho-L-tyrosyl-[protein] + H2O = L-tyrosyl-[protein] + phosphate. Its function is as follows. Dephosphorylates etk. The sequence is that of Low molecular weight protein-tyrosine-phosphatase Etp (etp) from Escherichia coli O157:H7.